The sequence spans 983 residues: UPF0182 protein CMM_1204 (983 aa).

Transmembrane regions (helical) follow at residues 16–36 (LAIT…FAGF), 56–76 (WGAG…PVFV), 108–128 (LAMF…ASSG), 161–181 (FYHA…LGVL), 205–225 (IQIA…IWLD), 255–275 (AILA…AVIG), and 281–301 (IIGT…YPAI). A compositionally biased stretch (polar residues) spans 699 to 714 (QDLWTTPNDPTATTEA). Disordered regions lie at residues 699–718 (QDLW…GTPA) and 884–936 (DSGA…AQDV). Positions 902–918 (GGTGDGATDGATDGGTG) are enriched in gly residues. A compositionally biased stretch (low complexity) spans 919–933 (STPTPAPTTSPSAPA).

The protein belongs to the UPF0182 family.

The protein localises to the cell membrane. This Clavibacter michiganensis subsp. michiganensis (strain NCPPB 382) protein is UPF0182 protein CMM_1204.